Reading from the N-terminus, the 619-residue chain is MFDGGVPEQIHRFIASPPPPPPLPPHQPAAERSLPFPVSFSSFNTNHQPQHMLSLDSRKIIHHHHHHHHHDIKDGGATTGEWIGQTDHDDSDNHHQHHHHHPWCSDEVLALLRFRSTVENWFPEFTWEHTSRKLAEVGFKRSPQECKEKFEEEERRYFNSNNNNNNNTNDHQHIGNYNNKGNNYRIFSEVEEFYHHGHDNEHVSSEVGDNQNKRTNLVEGKGNVGETVQDLMAEDKLRDQDQGQVEEASMENQRNSIEVGKVGNVEDDAKSSSSSSLMMIMKEKKRKKRKKEKERFGVLKGFCEGLVRNMIAQQEEMHKKLLEDMVKKEEEKIAREEAWKKQEIERVNKEVEIRAQEQAMASDRNTNIIKFISKFTDHDLDVVQNPTSPSQDSSSLALRKTQGRRKFQTSSSLLPQTLTPHNLLTIDKSLEPFSTKTLKPKNQNPKPPKSDDKSDLGKRWPKDEVLALINIRRSISNMNDDDHKDENSLSTSSKAVPLWERISKKMLEIGYKRSAKRCKEKWENINKYFRKTKDVNKKRPLDSRTCPYFHQLTALYSQPPTGTTATTATTATSARDLDTRPEENRVGSQDPDISVPMHVDGDGAGDKSNVQFSGFDLEF.

Disordered regions lie at residues 11–41 (HRFI…VSFS) and 62–100 (HHHH…HHHH). Pro residues predominate over residues 16–27 (SPPPPPPLPPHQ). Positions 102–154 (PWCSDEVLALLRFRSTVENWFPEFTWEHTSRKLAEVGFKRSPQECKEKFEEEE) constitute a Myb-like 1 domain. The stretch at 307–361 (VRNMIAQQEEMHKKLLEDMVKKEEEKIAREEAWKKQEIERVNKEVEIRAQEQAMA) forms a coiled coil. Disordered stretches follow at residues 382–414 (VVQN…SSLL) and 434–458 (STKT…DLGK). The segment covering 384–396 (QNPTSPSQDSSSL) has biased composition (polar residues). Positions 435–444 (TKTLKPKNQN) are enriched in low complexity. Over residues 448-458 (PKSDDKSDLGK) the composition is skewed to basic and acidic residues. One can recognise a Myb-like 2 domain in the interval 459–526 (RWPKDEVLAL…RCKEKWENIN (68 aa)). Positions 503–510 (SKKMLEIG) match the Nuclear localization signal motif. A disordered region spans residues 557–619 (SQPPTGTTAT…VQFSGFDLEF (63 aa)). The span at 561 to 574 (TGTTATTATTATSA) shows a compositional bias: low complexity. Positions 575 to 585 (RDLDTRPEENR) are enriched in basic and acidic residues.

The protein resides in the nucleus. Functionally, probable transcription factor that binds specific DNA sequence. This is Trihelix transcription factor GTL2 from Arabidopsis thaliana (Mouse-ear cress).